The chain runs to 333 residues: FAD-dependent monooxygenase pytG (333 aa).

Residues 6-26 traverse the membrane as a helical segment; that stretch reads LPNVSVAIIGAGIGGLTLGAF. Positions 38 and 109 each coordinate FAD. N-linked (GlcNAc...) asparagine glycosylation occurs at asparagine 303.

Belongs to the paxM FAD-dependent monooxygenase family. FAD serves as cofactor.

The protein localises to the membrane. It functions in the pathway secondary metabolite biosynthesis. FAD-dependent monooxygenase; part of the gene cluster that mediates the biosynthesis of pyranterreones, a family of antioxidative compounds. The first step of pyranonigrins biosynthesis is performed by the hybrid PKS-NRPS synthetase pytA that condenses 4 malonyl-CoA units ato the acetyl starter unit by the modular PKS of pytA. The acyl chain is then connected to an L-serine through the amide bond by the modular NRPS of pytA. A tetramic acid is formed and released from the PKS-NRPS pytA to give pyranterreone 5 with the help of the thioesterase pytI. Pyranterreone 5 could be methylated by pytC to afford pyranterreone 6. Both pyranterreones 5 and 6 are subsequently oxidized by the FAD-linked oxidoreductase pytB and the cytochrome P450 monooxygenase pytD to form the fused gamma-pyrone core, resulting in pyranterreones 7 and 11, respectively. The hydroxy group at C-8 of pyranterreones 7 and 11 are dehydrated by the aspartyl protease pytH to form a delta-7 double bond to give pyranterreones 3 and 1, 2 accordingly. The exo-methylene of pyranterreone 3 could be reduced into a pendant methyl by reductase pytE to provide pyranterreone 4, also known as cordylactam. Pyranterreone 4 can be reconverted to pyranterreone 3 through pytB-catalyzed dehydrogenation or further oxidized to pyranterreones 9 and 10. The chain is FAD-dependent monooxygenase pytG from Aspergillus terreus (strain NIH 2624 / FGSC A1156).